The chain runs to 544 residues: Chaperonin GroEL 4 (544 aa).

Residues 30–33 (TLGP), Lys51, 87–91 (DGTTT), Gly415, and Asp496 each bind ATP.

The protein belongs to the chaperonin (HSP60) family. Forms a cylinder of 14 subunits composed of two heptameric rings stacked back-to-back. Interacts with the co-chaperonin GroES.

The protein resides in the cytoplasm. It catalyses the reaction ATP + H2O + a folded polypeptide = ADP + phosphate + an unfolded polypeptide.. In terms of biological role, together with its co-chaperonin GroES, plays an essential role in assisting protein folding. The GroEL-GroES system forms a nano-cage that allows encapsulation of the non-native substrate proteins and provides a physical environment optimized to promote and accelerate protein folding. The chain is Chaperonin GroEL 4 from Sinorhizobium medicae (strain WSM419) (Ensifer medicae).